The primary structure comprises 63 residues: Ferredoxin (63 aa).

The region spanning 2–29 (KVTVDQDLCIACGTCIDLCPSVFDWDDE) is the 4Fe-4S ferredoxin-type domain. The [4Fe-4S] cluster site is built by Cys10, Cys13, Cys16, and Cys55.

Requires [4Fe-4S] cluster as cofactor.

Ferredoxins are iron-sulfur proteins that transfer electrons in a wide variety of metabolic reactions. This Moorella thermoacetica (Clostridium thermoaceticum) protein is Ferredoxin.